The sequence spans 450 residues: Probable transporter MCH1 (450 aa).

The next 12 helical transmembrane spans lie at 32-52 (AFLV…ISLY), 69-89 (VLFS…GLLS), 96-116 (MLSW…AWVF), 127-147 (VLCF…ALFT), 157-177 (LCSI…GSQL), 199-219 (LAVA…IVTM), 255-275 (PAAY…EMFL), 290-309 (VLPE…GLII), 320-340 (MSVQ…VVLA), 355-375 (LSGA…LAVW), 378-398 (AVFG…SILF), and 423-443 (VFWS…LMYL).

It belongs to the major facilitator superfamily.

It is found in the vacuole membrane. Its function is as follows. Probable transporter. This chain is Probable transporter MCH1 (MCH1), found in Eremothecium gossypii (strain ATCC 10895 / CBS 109.51 / FGSC 9923 / NRRL Y-1056) (Yeast).